The sequence spans 428 residues: Nematode resistance protein-like HSPRO1 (428 aa).

Interacts with SNF4.

It localises to the cytoplasm. In terms of biological role, positive regulator of basal resistance. This is Nematode resistance protein-like HSPRO1 (HSPRO1) from Arabidopsis thaliana (Mouse-ear cress).